Here is a 295-residue protein sequence, read N- to C-terminus: Tyrosine recombinase XerC (295 aa).

In terms of domain architecture, Core-binding (CB) spans 1–85; it reads MHILLQKYYN…ALRQFLNYLV (85 aa). Positions 106–285 constitute a Tyr recombinase domain; it reads YLPKNMDMEQ…DFQHLAQVYD (180 aa). Active-site residues include Arg145, Lys169, His237, Arg240, and His263. The O-(3'-phospho-DNA)-tyrosine intermediate role is filled by Tyr272.

The protein belongs to the 'phage' integrase family. XerC subfamily. Forms a cyclic heterotetrameric complex composed of two molecules of XerC and two molecules of XerD.

The protein localises to the cytoplasm. Its function is as follows. Site-specific tyrosine recombinase, which acts by catalyzing the cutting and rejoining of the recombining DNA molecules. The XerC-XerD complex is essential to convert dimers of the bacterial chromosome into monomers to permit their segregation at cell division. It also contributes to the segregational stability of plasmids. The sequence is that of Tyrosine recombinase XerC from Histophilus somni (strain 2336) (Haemophilus somnus).